The following is a 589-amino-acid chain: Arylsulfatase L (589 aa).

The N-terminal stretch at 1–31 is a signal peptide; it reads MLHLHHSCLCFRSWLPAMLAVLLSLAPSASS. Positions 46 and 47 each coordinate Ca(2+). Asn58 carries N-linked (GlcNAc...) asparagine glycosylation. Ca(2+) is bound at residue Cys86. Cys86 (nucleophile) is an active-site residue. A 3-oxoalanine (Cys) modification is found at Cys86. N-linked (GlcNAc...) asparagine glycosylation occurs at Asn125. Substrate is bound at residue Lys145. Residue His147 is part of the active site. An N-linked (GlcNAc...) asparagine glycan is attached at Asn258. His301 lines the substrate pocket. A glycan (N-linked (GlcNAc...) asparagine) is linked at Asn344. 2 residues coordinate Ca(2+): Asp353 and His354. Lys378 contacts substrate.

Belongs to the sulfatase family. The cofactor is Ca(2+). In terms of processing, N-glycosylated. Post-translationally, the conversion to 3-oxoalanine (also known as C-formylglycine, FGly), of a serine or cysteine residue in prokaryotes and of a cysteine residue in eukaryotes, is critical for catalytic activity. Expressed in the pancreas, liver and kidney.

The protein resides in the golgi apparatus. The protein localises to the golgi stack. The enzyme catalyses an aryl sulfate + H2O = a phenol + sulfate + H(+). Its activity is regulated as follows. Inhibited by millimolar concentrations of warfarin. Functionally, exhibits arylsulfatase activity towards the artificial substrate 4-methylumbelliferyl sulfate. May be essential for the correct composition of cartilage and bone matrix during development. Has no activity toward steroid sulfates. This chain is Arylsulfatase L, found in Homo sapiens (Human).